A 1859-amino-acid polypeptide reads, in one-letter code: Retinitis pigmentosa 1-like 1 protein (1859 aa).

Disordered stretches follow at residues 1-22 (MNST…PSHR) and 115-154 (RKPP…YSWK). The region spanning 42-126 (KKITFLKRGD…PPKTSREPGR (85 aa)) is the Doublecortin 1 domain. Residues 115-126 (RKPPKTSREPGR) are compositionally biased toward basic and acidic residues. Polar residues predominate over residues 130–139 (KSPSAGQAQV). Positions 160 to 239 (RRLTLVKNGD…NEAFRCLEME (80 aa)) constitute a Doublecortin 2 domain. Disordered stretches follow at residues 263–301 (PNAK…SGHR), 426–445 (IWRN…RRRW), 457–593 (WRQE…TQSH), 700–750 (MPQE…TSKA), 868–920 (CFGR…TPSA), 952–997 (NTEV…GVLS), 1152–1211 (TEDF…YPEL), 1227–1255 (ATGG…STML), 1298–1350 (GSQD…RVRE), and 1567–1859 (LQSK…DLDF). Residues 457-472 (WRQEANHRKGHDKDNL) are compositionally biased toward basic and acidic residues. Polar residues-rich tracts occupy residues 499–512 (GSDT…ASSH) and 535–551 (PETQ…SVSA). Residues 716-728 (SPSNSPSAGNQAS) are compositionally biased toward low complexity. Over residues 734 to 750 (PFSSSLDLQEPQATSKA) the composition is skewed to polar residues. Residues 870–883 (GRESASNGSTSSGH) are compositionally biased toward low complexity. Composition is skewed to polar residues over residues 1241 to 1252 (TWGNAPEQSVHS), 1336 to 1345 (ESPQHFSESN), and 1567 to 1577 (LQSKKGGSSNR). The segment covering 1616 to 1632 (GEGKQRLRAEEDPEILK) has biased composition (basic and acidic residues). The segment covering 1641-1652 (PEEDEATEEDGE) has biased composition (acidic residues). Residues 1700–1720 (EASRERQQEVEGRHQDVKEDS) show a composition bias toward basic and acidic residues. Over residues 1756 to 1778 (SHHTACSSRALSLDNSSQVSQKG) the composition is skewed to polar residues.

In terms of assembly, interacts with RP1; has a synergistic effect with RP1 in photoreceptor differentiation. In terms of tissue distribution, retinal-specific; expressed in photoreceptor.

It is found in the cytoplasm. Its subcellular location is the cytoskeleton. The protein localises to the cilium axoneme. The protein resides in the cell projection. It localises to the cilium. It is found in the photoreceptor outer segment. In terms of biological role, required for the differentiation of photoreceptor cells. Plays a role in the organization of outer segment of rod and cone photoreceptors. This Mus musculus (Mouse) protein is Retinitis pigmentosa 1-like 1 protein (Rp1l1).